Consider the following 245-residue polypeptide: Small ribosomal subunit protein uS2 (245 aa).

The segment at 226 to 245 (GGGANVGEMENPPVEATADA) is disordered.

This sequence belongs to the universal ribosomal protein uS2 family.

The protein is Small ribosomal subunit protein uS2 of Erythrobacter litoralis (strain HTCC2594).